The sequence spans 465 residues: GTPase Der (465 aa).

2 EngA-type G domains span residues 3-166 (FLVA…LNEF) and 184-358 (IHFS…ACAN). GTP is bound by residues 9–16 (GRANVGKS), 56–60 (DTGGI), 118–121 (NKVD), 190–197 (GRPNVGKS), 237–241 (DTAGV), and 302–305 (NKWD). In terms of domain architecture, KH-like spans 359–443 (KKITTADATR…PIVFEFKQSE (85 aa)).

Belongs to the TRAFAC class TrmE-Era-EngA-EngB-Septin-like GTPase superfamily. EngA (Der) GTPase family. Associates with the 50S ribosomal subunit.

Its function is as follows. GTPase that plays an essential role in the late steps of ribosome biogenesis. The sequence is that of GTPase Der from Francisella philomiragia subsp. philomiragia (strain ATCC 25017 / CCUG 19701 / FSC 153 / O#319-036).